A 229-amino-acid polypeptide reads, in one-letter code: Triosephosphate isomerase (229 aa).

9–11 (NYK) contacts substrate. Residue histidine 93 is the Electrophile of the active site. The Proton acceptor role is filled by glutamate 141. Substrate contacts are provided by residues isoleucine 146, glycine 180, and 201–202 (AS).

It belongs to the triosephosphate isomerase family. Homotetramer; dimer of dimers.

The protein resides in the cytoplasm. The enzyme catalyses D-glyceraldehyde 3-phosphate = dihydroxyacetone phosphate. It functions in the pathway carbohydrate biosynthesis; gluconeogenesis. Its pathway is carbohydrate degradation; glycolysis; D-glyceraldehyde 3-phosphate from glycerone phosphate: step 1/1. Functionally, involved in the gluconeogenesis. Catalyzes stereospecifically the conversion of dihydroxyacetone phosphate (DHAP) to D-glyceraldehyde-3-phosphate (G3P). This Sulfurisphaera tokodaii (strain DSM 16993 / JCM 10545 / NBRC 100140 / 7) (Sulfolobus tokodaii) protein is Triosephosphate isomerase.